The following is a 287-amino-acid chain: Pantothenate synthetase (287 aa).

30–37 (MGNLHSGH) contributes to the ATP binding site. His-37 functions as the Proton donor in the catalytic mechanism. Gln-61 is a binding site for (R)-pantoate. A beta-alanine-binding site is contributed by Gln-61. 149-152 (GEKD) serves as a coordination point for ATP. Gln-155 contacts (R)-pantoate. ATP is bound by residues Val-178 and 186-189 (LSSR).

This sequence belongs to the pantothenate synthetase family. Homodimer.

It is found in the cytoplasm. It catalyses the reaction (R)-pantoate + beta-alanine + ATP = (R)-pantothenate + AMP + diphosphate + H(+). The protein operates within cofactor biosynthesis; (R)-pantothenate biosynthesis; (R)-pantothenate from (R)-pantoate and beta-alanine: step 1/1. In terms of biological role, catalyzes the condensation of pantoate with beta-alanine in an ATP-dependent reaction via a pantoyl-adenylate intermediate. The polypeptide is Pantothenate synthetase (Pseudomonas putida (strain W619)).